We begin with the raw amino-acid sequence, 208 residues long: Uracil phosphoribosyltransferase (208 aa).

5-phospho-alpha-D-ribose 1-diphosphate-binding positions include R78, R103, and 130–138; that span reads DPMLATGGS. Uracil is bound by residues I193 and 198 to 200; that span reads GDA. D199 provides a ligand contact to 5-phospho-alpha-D-ribose 1-diphosphate.

This sequence belongs to the UPRTase family. It depends on Mg(2+) as a cofactor.

It catalyses the reaction UMP + diphosphate = 5-phospho-alpha-D-ribose 1-diphosphate + uracil. It participates in pyrimidine metabolism; UMP biosynthesis via salvage pathway; UMP from uracil: step 1/1. Allosterically activated by GTP. In terms of biological role, catalyzes the conversion of uracil and 5-phospho-alpha-D-ribose 1-diphosphate (PRPP) to UMP and diphosphate. The polypeptide is Uracil phosphoribosyltransferase (Shewanella frigidimarina (strain NCIMB 400)).